Consider the following 407-residue polypeptide: Divalent metal cation transporter MntH (407 aa).

11 consecutive transmembrane segments (helical) span residues 16-36 (LTLL…GNFA), 43-63 (STFG…AMLV), 95-115 (WVQA…GAAV), 119-139 (LLLG…TWGI), 152-172 (FVVG…LVFS), 193-213 (AVYL…IYLH), 239-259 (IAMT…AAAF), 288-308 (LFGL…TLAG), 318-338 (FTIP…VVIA), 346-366 (ILVL…IPLL), and 387-407 (VGRL…VAMI).

The protein belongs to the NRAMP family.

The protein localises to the cell inner membrane. H(+)-stimulated, divalent metal cation uptake system. The chain is Divalent metal cation transporter MntH from Aeromonas hydrophila subsp. hydrophila (strain ATCC 7966 / DSM 30187 / BCRC 13018 / CCUG 14551 / JCM 1027 / KCTC 2358 / NCIMB 9240 / NCTC 8049).